The sequence spans 208 residues: CASP-like protein 2U9 (208 aa).

Residues 1 to 27 (MGVADAPSPGNVPVLGDMKNRSAAEMK) are Cytoplasmic-facing. A helical transmembrane segment spans residues 28-48 (ISVLALRALTLVLLVIALALM). Topologically, residues 49 to 87 (VSNKQTQSIPIKLPGMASTIFLKKTATFSQITGVQYYVG) are extracellular. The chain crosses the membrane as a helical span at residues 88–108 (ALSVAVAYMFFQMLAGLFTIL). The Cytoplasmic segment spans residues 109–120 (TTGSIVGSKSRA). The chain crosses the membrane as a helical span at residues 121-141 (WVTFILDQLIAYLMVSAATVV). Over 142 to 168 (AEVGYIARRGETKVGWNQVCSDFKHYC) the chain is Extracellular. The chain crosses the membrane as a helical span at residues 169 to 189 (FIYGFSLVNAFLATIAFLPVV). The Cytoplasmic segment spans residues 190–208 (AVSAFHLFRMYGAQSAQSK).

The protein belongs to the Casparian strip membrane proteins (CASP) family. As to quaternary structure, homodimer and heterodimers.

The protein resides in the cell membrane. In Selaginella moellendorffii (Spikemoss), this protein is CASP-like protein 2U9.